The chain runs to 228 residues: NAD(P)H-quinone oxidoreductase subunit K, chloroplastic (228 aa).

The [4Fe-4S] cluster site is built by C43, C44, C108, and C139.

Belongs to the complex I 20 kDa subunit family. As to quaternary structure, NDH is composed of at least 16 different subunits, 5 of which are encoded in the nucleus. The cofactor is [4Fe-4S] cluster.

The protein localises to the plastid. It localises to the chloroplast thylakoid membrane. The catalysed reaction is a plastoquinone + NADH + (n+1) H(+)(in) = a plastoquinol + NAD(+) + n H(+)(out). The enzyme catalyses a plastoquinone + NADPH + (n+1) H(+)(in) = a plastoquinol + NADP(+) + n H(+)(out). In terms of biological role, NDH shuttles electrons from NAD(P)H:plastoquinone, via FMN and iron-sulfur (Fe-S) centers, to quinones in the photosynthetic chain and possibly in a chloroplast respiratory chain. The immediate electron acceptor for the enzyme in this species is believed to be plastoquinone. Couples the redox reaction to proton translocation, and thus conserves the redox energy in a proton gradient. This is NAD(P)H-quinone oxidoreductase subunit K, chloroplastic from Ceratophyllum demersum (Rigid hornwort).